A 491-amino-acid polypeptide reads, in one-letter code: Cyclin-A1-3 (491 aa).

The segment covering 1-21 (MSSSLASRRSSSSSAAKRPAA) has biased composition (low complexity). Disordered stretches follow at residues 1–32 (MSSS…AAGA) and 69–106 (SLAS…QKES). Residues 75 to 91 (NVGTNRVSAVKSASTKP) show a composition bias toward polar residues.

It belongs to the cyclin family. Cyclin AB subfamily.

This Oryza sativa subsp. japonica (Rice) protein is Cyclin-A1-3 (CYCA1-3).